The following is a 96-amino-acid chain: Co-chaperonin GroES (96 aa).

The protein belongs to the GroES chaperonin family. Heptamer of 7 subunits arranged in a ring. Interacts with the chaperonin GroEL.

Its subcellular location is the cytoplasm. In terms of biological role, together with the chaperonin GroEL, plays an essential role in assisting protein folding. The GroEL-GroES system forms a nano-cage that allows encapsulation of the non-native substrate proteins and provides a physical environment optimized to promote and accelerate protein folding. GroES binds to the apical surface of the GroEL ring, thereby capping the opening of the GroEL channel. The polypeptide is Co-chaperonin GroES (Herminiimonas arsenicoxydans).